Here is a 63-residue protein sequence, read N- to C-terminus: Cecropin-2 (63 aa).

The N-terminal stretch at 1–21 is a signal peptide; sequence MNFNKVLVLLAVIFAVFAGQT. Residues 22–23 constitute a propeptide that is removed on maturation; the sequence is EA. Lysine amide is present on Lys62.

The protein belongs to the cecropin family.

It is found in the secreted. Cecropins have lytic and antibacterial activity against several Gram-positive and Gram-negative bacteria. The polypeptide is Cecropin-2 (CEC2) (Ceratitis capitata (Mediterranean fruit fly)).